A 497-amino-acid chain; its full sequence is MVLAQLGGSISRALAQMSNATVIDEKVLGECLNEISRALLQSDVQFKMVRDMQTNIRKIVNLETLAAGTNKRRIIQQAVFTELCNMLDPGKPAFTPKKGKPSVVMFVGLQGSGKTTTCTKYAYYHQRKGFKPSLVCADTFRAGAFDQLKQNATKAKIPFYGSYMESDPVKIAVEGLERFRKENSDLIIIDTSGRHKQEAALFEEMRQVAEATKPDLVIFVMDGSIGQAAFDQAQAFKQSASVGAVIITKLDGHAKGGGALSAVAATKSPVIFIGTGEHIDEFEIFDVKPFVSRLLGMGDLSGLMDKIQDVMPADQQPELLAKLAEGTFTLRLLYEQFQNLLKMGPIGQVFSMLPGFSSELMPKGHEKEGQAKIKRYMTIMDSMTAAELDSTNPKLMTESRIIRIARGSGRQIRDVTDMLEEYKRLAKMWSKMKGLKMPKNGKMSDLSQNLNIQQMTKALPPQVLKQMGGMGGLQALMKQMGGKDMSKMLGGMGLGGD.

Residues 1–295 (MVLAQLGGSI…DVKPFVSRLL (295 aa)) form a G-domain region. GTP is bound by residues 108–115 (GLQGSGKT), 190–194 (DTSGR), and 248–251 (TKLD). The M-domain stretch occupies residues 296 to 497 (GMGDLSGLMD…MLGGMGLGGD (202 aa)).

Belongs to the GTP-binding SRP family. SRP54 subfamily. Component of a signal recognition particle (SRP) complex that consists of a 7SL RNA molecule of 300 nucleotides and six protein subunits: SRP72, SRP68, SRP54, SRP19, SRP14 and SRP9.

Its subcellular location is the cytoplasm. The protein localises to the endoplasmic reticulum. It catalyses the reaction GTP + H2O = GDP + phosphate + H(+). Functionally, component of the signal recognition particle (SRP) complex, a ribonucleoprotein complex that mediates the cotranslational targeting of secretory and membrane proteins to the endoplasmic reticulum (ER). As part of the SRP complex, associates with the SRP receptor (SR) component SRPRA to target secretory proteins to the endoplasmic reticulum membrane. Binds to the signal sequence of presecretory proteins when they emerge from the ribosomes. Displays basal GTPase activity, and stimulates reciprocal GTPase activation of the SR subunit SRPRA. Forms a guanosine 5'-triphosphate (GTP)-dependent complex with the SR subunit SRPRA. SR compaction and GTPase mediated rearrangement of SR drive SRP-mediated cotranslational protein translocation into the ER. Requires the presence of SRP9/SRP14 and/or SRP19 to stably interact with RNA. This Hordeum vulgare (Barley) protein is Signal recognition particle subunit SRP54 2 (SRP54-2).